A 127-amino-acid polypeptide reads, in one-letter code: UPF0102 protein Glov_2230 (127 aa).

This sequence belongs to the UPF0102 family.

This Trichlorobacter lovleyi (strain ATCC BAA-1151 / DSM 17278 / SZ) (Geobacter lovleyi) protein is UPF0102 protein Glov_2230.